Consider the following 179-residue polypeptide: Large ribosomal subunit protein uL5 (179 aa).

This sequence belongs to the universal ribosomal protein uL5 family. Part of the 50S ribosomal subunit; part of the 5S rRNA/L5/L18/L25 subcomplex. Contacts the 5S rRNA and the P site tRNA. Forms a bridge to the 30S subunit in the 70S ribosome.

In terms of biological role, this is one of the proteins that bind and probably mediate the attachment of the 5S RNA into the large ribosomal subunit, where it forms part of the central protuberance. In the 70S ribosome it contacts protein S13 of the 30S subunit (bridge B1b), connecting the 2 subunits; this bridge is implicated in subunit movement. Contacts the P site tRNA; the 5S rRNA and some of its associated proteins might help stabilize positioning of ribosome-bound tRNAs. The protein is Large ribosomal subunit protein uL5 of Geotalea daltonii (strain DSM 22248 / JCM 15807 / FRC-32) (Geobacter daltonii).